The primary structure comprises 331 residues: Probable allantoicase (331 aa).

Belongs to the allantoicase family.

It carries out the reaction allantoate + H2O = (S)-ureidoglycolate + urea. It participates in nitrogen metabolism; (S)-allantoin degradation; (S)-ureidoglycolate from allantoate (aminidohydrolase route): step 1/1. This Pseudomonas syringae pv. syringae (strain B728a) protein is Probable allantoicase.